Reading from the N-terminus, the 277-residue chain is Large ribosomal subunit protein uL2 (277 aa).

Disordered regions lie at residues 32–58 and 225–277; these read KSLT…RGGG and VAMN…RRNN.

The protein belongs to the universal ribosomal protein uL2 family. In terms of assembly, part of the 50S ribosomal subunit. Forms a bridge to the 30S subunit in the 70S ribosome.

Its function is as follows. One of the primary rRNA binding proteins. Required for association of the 30S and 50S subunits to form the 70S ribosome, for tRNA binding and peptide bond formation. It has been suggested to have peptidyltransferase activity; this is somewhat controversial. Makes several contacts with the 16S rRNA in the 70S ribosome. In Borrelia duttonii (strain Ly), this protein is Large ribosomal subunit protein uL2.